We begin with the raw amino-acid sequence, 162 residues long: SsrA-binding protein (162 aa).

This sequence belongs to the SmpB family.

Its subcellular location is the cytoplasm. Its function is as follows. Required for rescue of stalled ribosomes mediated by trans-translation. Binds to transfer-messenger RNA (tmRNA), required for stable association of tmRNA with ribosomes. tmRNA and SmpB together mimic tRNA shape, replacing the anticodon stem-loop with SmpB. tmRNA is encoded by the ssrA gene; the 2 termini fold to resemble tRNA(Ala) and it encodes a 'tag peptide', a short internal open reading frame. During trans-translation Ala-aminoacylated tmRNA acts like a tRNA, entering the A-site of stalled ribosomes, displacing the stalled mRNA. The ribosome then switches to translate the ORF on the tmRNA; the nascent peptide is terminated with the 'tag peptide' encoded by the tmRNA and targeted for degradation. The ribosome is freed to recommence translation, which seems to be the essential function of trans-translation. The chain is SsrA-binding protein from Colwellia psychrerythraea (strain 34H / ATCC BAA-681) (Vibrio psychroerythus).